The sequence spans 178 residues: MEKIKSTTILAVRRNGKTVIAGDGQVTLGSAVVKHTAKKIRVLNEGKVIVGFAGSAADGLALMERLEEKLNKYKGNLVKSAVELAKDWRLDKYLRRLEAVMIAADKNNMLLLSGNGDVIEPDEPVLAIGSGGDYARSAALALYRNTDLDARKIVEEAMKIAGEICIYTNQNFVIEEIE.

Thr-7 is a catalytic residue. Gly-162, Cys-165, and Thr-168 together coordinate Na(+).

This sequence belongs to the peptidase T1B family. HslV subfamily. In terms of assembly, a double ring-shaped homohexamer of HslV is capped on each side by a ring-shaped HslU homohexamer. The assembly of the HslU/HslV complex is dependent on binding of ATP.

It is found in the cytoplasm. It catalyses the reaction ATP-dependent cleavage of peptide bonds with broad specificity.. With respect to regulation, allosterically activated by HslU binding. In terms of biological role, protease subunit of a proteasome-like degradation complex believed to be a general protein degrading machinery. This is ATP-dependent protease subunit HslV from Sulfurihydrogenibium sp. (strain YO3AOP1).